Consider the following 339-residue polypeptide: HTH-type transcriptional regulator PtxS (339 aa).

One can recognise an HTH lacI-type domain in the interval 12-67 (VTISEVARVAGVSKATVSRYIGGDRQLLAEATAKRLEEVIERLGYRPNQMARGLKR). A DNA-binding region (H-T-H motif) is located at residues 14 to 33 (ISEVARVAGVSKATVSRYIG).

As to quaternary structure, homodimer in solution.

Its activity is regulated as follows. 2-ketogluconate acts as a molecular effector and causes dissociation of PtxS from its target promoter. Its function is as follows. Negatively regulates glucose metabolism by binding directly to the promoter region of the kgu and gad operons. It also negatively regulates its own synthesis. This is HTH-type transcriptional regulator PtxS from Pseudomonas putida (strain ATCC 47054 / DSM 6125 / CFBP 8728 / NCIMB 11950 / KT2440).